A 137-amino-acid chain; its full sequence is SMR2 protein (137 aa).

The first 18 residues, M1–N18, serve as a signal peptide directing secretion. Residues S14–Q113 form a disordered region. Residues Q75–Q85 are compositionally biased toward low complexity. Residues P99–L110 are compositionally biased toward basic and acidic residues.

The protein localises to the secreted. Its function is as follows. Unknown, male-specific function. This Rattus norvegicus (Rat) protein is SMR2 protein (Smr2).